Here is a 463-residue protein sequence, read N- to C-terminus: Bifunctional protein GlmU (463 aa).

The interval 1–228 (MEQALSIVVL…PAEVQGVNDR (228 aa)) is pyrophosphorylase. Residues 10–13 (LAAG), Lys-24, Gln-75, 80–81 (GT), 102–104 (YGD), Gly-138, Glu-153, Asn-168, and Asn-226 contribute to the UDP-N-acetyl-alpha-D-glucosamine site. Position 104 (Asp-104) interacts with Mg(2+). Asn-226 lines the Mg(2+) pocket. Residues 229–249 (VQLAAAERVWQRRQAEDWMRA) form a linker region. The tract at residues 250–463 (GVTILDPDRF…RPDRGEGSDA (214 aa)) is N-acetyltransferase. 2 residues coordinate UDP-N-acetyl-alpha-D-glucosamine: Arg-332 and Lys-350. The active-site Proton acceptor is His-362. Residues Tyr-365 and Asn-376 each coordinate UDP-N-acetyl-alpha-D-glucosamine. Residues Ala-379, 385-386 (NY), Ser-404, Ala-422, and Arg-439 each bind acetyl-CoA. Residues 437–463 (VARSAQRSIHGWRRPGQRPDRGEGSDA) form a disordered region. The span at 453–463 (QRPDRGEGSDA) shows a compositional bias: basic and acidic residues.

In the N-terminal section; belongs to the N-acetylglucosamine-1-phosphate uridyltransferase family. This sequence in the C-terminal section; belongs to the transferase hexapeptide repeat family. Homotrimer. The cofactor is Mg(2+).

The protein localises to the cytoplasm. The catalysed reaction is alpha-D-glucosamine 1-phosphate + acetyl-CoA = N-acetyl-alpha-D-glucosamine 1-phosphate + CoA + H(+). It carries out the reaction N-acetyl-alpha-D-glucosamine 1-phosphate + UTP + H(+) = UDP-N-acetyl-alpha-D-glucosamine + diphosphate. It functions in the pathway nucleotide-sugar biosynthesis; UDP-N-acetyl-alpha-D-glucosamine biosynthesis; N-acetyl-alpha-D-glucosamine 1-phosphate from alpha-D-glucosamine 6-phosphate (route II): step 2/2. The protein operates within nucleotide-sugar biosynthesis; UDP-N-acetyl-alpha-D-glucosamine biosynthesis; UDP-N-acetyl-alpha-D-glucosamine from N-acetyl-alpha-D-glucosamine 1-phosphate: step 1/1. Its pathway is bacterial outer membrane biogenesis; LPS lipid A biosynthesis. In terms of biological role, catalyzes the last two sequential reactions in the de novo biosynthetic pathway for UDP-N-acetylglucosamine (UDP-GlcNAc). The C-terminal domain catalyzes the transfer of acetyl group from acetyl coenzyme A to glucosamine-1-phosphate (GlcN-1-P) to produce N-acetylglucosamine-1-phosphate (GlcNAc-1-P), which is converted into UDP-GlcNAc by the transfer of uridine 5-monophosphate (from uridine 5-triphosphate), a reaction catalyzed by the N-terminal domain. This chain is Bifunctional protein GlmU, found in Alkalilimnicola ehrlichii (strain ATCC BAA-1101 / DSM 17681 / MLHE-1).